The following is a 98-amino-acid chain: Small ribosomal subunit protein bS6 (98 aa).

The protein belongs to the bacterial ribosomal protein bS6 family.

Functionally, binds together with bS18 to 16S ribosomal RNA. This is Small ribosomal subunit protein bS6 from Lactobacillus acidophilus (strain ATCC 700396 / NCK56 / N2 / NCFM).